Reading from the N-terminus, the 335-residue chain is Homeobox protein unc-39 (335 aa).

2 disordered regions span residues 27-56 (FTSSSNSNTSNSSTSPSHISDQFSSSGGPP) and 269-294 (RRQRDKSNNSAKCSPPSSSSSTNGGS). Residues 28–41 (TSSSNSNTSNSSTS) show a composition bias toward low complexity. The span at 42 to 53 (PSHISDQFSSSG) shows a compositional bias: polar residues. Residues 225-277 (KDSSRKFLKQFFRNVSEYPTQEQKREISRATGLKIVQISNWFKNRRQRDKSNN) constitute a DNA-binding region (homeobox). A compositionally biased stretch (low complexity) spans 276–294 (NNSAKCSPPSSSSSTNGGS).

It belongs to the SIX/Sine oculis homeobox family.

It localises to the nucleus. Probable transcription factor required for differentiation and migration of neuronal cells, such as RID and CAN neurons. Specifically, plays a role in the terminal differentiation of RID peptidergic neurons. Also required for CAN neuron axon guidance. The polypeptide is Homeobox protein unc-39 (Caenorhabditis elegans).